We begin with the raw amino-acid sequence, 23 residues long: 48 kDa cell wall protein (23 aa).

Its subcellular location is the secreted. The protein localises to the cell wall. The chain is 48 kDa cell wall protein from Nicotiana tabacum (Common tobacco).